The primary structure comprises 577 residues: Arginine--tRNA ligase (577 aa).

The 'HIGH' region signature appears at P122 to H132.

It belongs to the class-I aminoacyl-tRNA synthetase family. Monomer.

Its subcellular location is the cytoplasm. It catalyses the reaction tRNA(Arg) + L-arginine + ATP = L-arginyl-tRNA(Arg) + AMP + diphosphate. The sequence is that of Arginine--tRNA ligase from Shigella flexneri.